Reading from the N-terminus, the 399-residue chain is Odorant receptor 42b (399 aa).

At 1–45 the chain is on the cytoplasmic side; it reads MVFELIRPAPLTEQKRSRDGCIYLYRAMKFIGWLPPKQGVLRYVY. Residues 46–66 form a helical membrane-spanning segment; sequence LTWTLMTFVWCTTYLPLGFLG. The Extracellular portion of the chain corresponds to 67–83; sequence SYMTQIKSFSPGEFLTS. The chain crosses the membrane as a helical span at residues 84–104; the sequence is LQVCINAYGSSVKVAITYSML. The Cytoplasmic segment spans residues 105-140; that stretch reads WRLIKAKNILDQLDLRCTAMEEREKIHLVVARSNHA. Residues 141-161 traverse the membrane as a helical segment; that stretch reads FLIFTFVYCGYAGSTYLSSVL. The Extracellular segment spans residues 162-178; it reads SGRPPWQLYNPFIDWHD. The helical transmembrane segment at 179-199 threads the bilayer; the sequence is GTLKLWVASTLEYMVMSGAVL. The Cytoplasmic portion of the chain corresponds to 200–268; the sequence is QDQLSDSYPL…AIIKPVIQGT (69 aa). Residues 269–289 form a helical membrane-spanning segment; that stretch reads IFTQFLLIGLVLGFTLINVFF. The Extracellular segment spans residues 290–292; that stretch reads FSD. A helical membrane pass occupies residues 293–313; the sequence is IWTGIASFMFVITILLQTFPF. Over 314-356 the chain is Cytoplasmic; it reads CYTCNLIMEDCESLTHAIFQSNWVDASRRYKTTLLYFLQNVQQ. Residues 357–377 form a helical membrane-spanning segment; that stretch reads PIVFIAGGIFQISMSSNISVA. Over 378–399 the chain is Extracellular; the sequence is KFAFSVITITKQMNIADKFKTD.

It belongs to the insect chemoreceptor superfamily. Heteromeric odorant receptor channel (TC 1.A.69) family. Or2a subfamily. In terms of assembly, interacts with Orco. Complexes exist early in the endomembrane system in olfactory sensory neurons (OSNs), coupling these complexes to the conserved ciliary trafficking pathway. In terms of tissue distribution, expressed in olfactory sensory neurons in the antenna.

The protein localises to the cell membrane. Functionally, odorant receptor which mediates acceptance or avoidance behavior, depending on its substrates. The odorant receptor repertoire encodes a large collection of odor stimuli that vary widely in identity, intensity, and duration. May form a complex with Orco to form odorant-sensing units, providing sensitive and prolonged odorant signaling and calcium permeability. Involved in the behavioral responses to ethyl acetate and pentyl acetate. The sequence is that of Odorant receptor 42b (Or42b) from Drosophila melanogaster (Fruit fly).